The following is a 511-amino-acid chain: MNFKQNIVYKKMAISMKITAIRPIALVISFTLLSCKDKVKTVEQQDEPTKPNIVYILTDQWRGAALGYAGDPNVKTPHLDALAKEAVNFTNAVSVTPVCTPHRASLLTGKYPITTGMFLNDLYLPSEELCMAEIFKAEGYNTAYWGKWHLDGHRRSAYTPKERRQGFDYWKALECSHDYNKMPYYDNDNPEVKYWGKYSPFAIVEDANTYLEKQAKDDTPFLAVVSIATPHFPHGSAPQKYKDMYSPESLILNPNVSPKFEARSREELQGYYAHATATDEAIGLLLKQMDALGLNENTIVVFSSDHGEMMGANDVRPFQKQVAWDESIRVPFLIKYPGIDKQKGVTVNAPINTPDILPSLLGLSNIKIPDGIEGEDLSELIKNPDPEADREALVMNVAPFAGGYPNLPYRAIRTKQYTYARTTEGPSMFFDNVADPYQQNNLLGKPEFETLQNELDAKLNKKLAELGDEFKSRDYYLKKYNYVFGKNKPAIPYWEFNNGKGEVQSPIPVTQ.

Positions 1–34 (MNFKQNIVYKKMAISMKITAIRPIALVISFTLLS) are cleaved as a signal peptide. The N-palmitoyl cysteine moiety is linked to residue cysteine 35. Residue cysteine 35 is the site of S-diacylglycerol cysteine attachment. Aspartate 59 and cysteine 99 together coordinate Ca(2+). The active-site Nucleophile is cysteine 99. The residue at position 99 (cysteine 99) is a 3-oxoalanine (Cys). Residue histidine 149 is part of the active site. Residue aspartate 305 coordinates Ca(2+).

This sequence belongs to the sulfatase family. Ca(2+) serves as cofactor. In terms of processing, the conversion to 3-oxoalanine (also known as C-formylglycine, FGly), of a serine or cysteine residue in prokaryotes and of a cysteine residue in eukaryotes, is critical for catalytic activity. This post-translational modification is severely defective in multiple sulfatase deficiency (MSD).

The protein localises to the cell membrane. Sulfatase involved in ulvan degradation. Ulvan is the main polysaccharide component of the Ulvales (green seaweed) cell wall. It is composed of disaccharide building blocks comprising 3-sulfated rhamnose (Rha3S) linked to D-glucuronic acid (GlcA), L-iduronic acid (IduA), or D-xylose (Xyl). This is Ulvan-active sulfatase from Formosa agariphila (strain DSM 15362 / KCTC 12365 / LMG 23005 / KMM 3901 / M-2Alg 35-1).